Consider the following 310-residue polypeptide: Ribonuclease Z (310 aa).

Zn(2+)-binding residues include histidine 64, histidine 66, aspartate 68, histidine 69, histidine 146, aspartate 215, and histidine 273. Aspartate 68 functions as the Proton acceptor in the catalytic mechanism.

The protein belongs to the RNase Z family. In terms of assembly, homodimer. Requires Zn(2+) as cofactor.

It carries out the reaction Endonucleolytic cleavage of RNA, removing extra 3' nucleotides from tRNA precursor, generating 3' termini of tRNAs. A 3'-hydroxy group is left at the tRNA terminus and a 5'-phosphoryl group is left at the trailer molecule.. Functionally, zinc phosphodiesterase, which displays some tRNA 3'-processing endonuclease activity. Probably involved in tRNA maturation, by removing a 3'-trailer from precursor tRNA. This chain is Ribonuclease Z, found in Aeropyrum pernix (strain ATCC 700893 / DSM 11879 / JCM 9820 / NBRC 100138 / K1).